We begin with the raw amino-acid sequence, 171 residues long: MSDASANGDATEGAAPAAAQLPKMQILGQFIRDLSFENAAVQYGTATQGQPDIQVQVALDARKRTVDNQYDVIMKLKIESKTKDEDAPKSIFLIELEYGGVFLIENIAEQQLHPFLMIECPRMLFPFVRRIISDMTRDGGYPPLNLDQIDFVALYRQQIAARQAQQPVGTA.

This sequence belongs to the SecB family. Homotetramer, a dimer of dimers. One homotetramer interacts with 1 SecA dimer.

It localises to the cytoplasm. Its function is as follows. One of the proteins required for the normal export of preproteins out of the cell cytoplasm. It is a molecular chaperone that binds to a subset of precursor proteins, maintaining them in a translocation-competent state. It also specifically binds to its receptor SecA. This Jannaschia sp. (strain CCS1) protein is Protein-export protein SecB.